The following is a 316-amino-acid chain: Metal tolerance protein 8 (316 aa).

Residues 1-15 (MGPVRHILNERKSRK) lie on the Cytoplasmic side of the membrane. Residues 16 to 36 (IAAFLLINTAYMFVEFTSGFM) traverse the membrane as a helical segment. Residues 37–45 (SDSLGLISD) lie on the Vacuolar side of the membrane. The chain crosses the membrane as a helical span at residues 46–66 (ACHMLFDCAALAIGLYASYIA). Residues 67 to 80 (RLPANGLYNYGRGR) are Cytoplasmic-facing. The chain crosses the membrane as a helical span at residues 81-101 (FEVLSGYVNAVFLVLVGALIV). Over 102 to 116 (LESFERILEPREIST) the chain is Vacuolar. The helical transmembrane segment at 117–137 (SSLLTVSIGGLVVNVIGLVFF) threads the bilayer. Residues 138-176 (HEEHHHAHGEAHSCNGGLQSSENHNKSRNRHHIDHNMEG) are Cytoplasmic-facing. The disordered stretch occupies residues 147-166 (EAHSCNGGLQSSENHNKSRN). The helical transmembrane segment at 177–197 (IFLHVLADTMGSVGVVISTLL) threads the bilayer. Over 198–202 (IKYKG) the chain is Vacuolar. The helical transmembrane segment at 203-223 (WLIADPICSVFISIMIVSSVL) threads the bilayer. Topologically, residues 224–316 (PLLRNSAEIL…LTIQIECVKR (93 aa)) are cytoplasmic.

Belongs to the cation diffusion facilitator (CDF) transporter (TC 2.A.4) family. SLC30A subfamily.

The protein resides in the vacuole membrane. Its function is as follows. Involved in sequestration of excess metal in the cytoplasm into vacuoles to maintain metal homeostasis. The chain is Metal tolerance protein 8 (MTP8) from Oryza sativa subsp. japonica (Rice).